Consider the following 341-residue polypeptide: Glyceraldehyde-3-phosphate dehydrogenase 1 (341 aa).

NAD(+) contacts are provided by residues Arg-13–Ile-14, Asp-35, and Lys-85. D-glyceraldehyde 3-phosphate is bound by residues Ser-157–Thr-159, Thr-188, Thr-217–Gly-218, and Arg-240. The active-site Nucleophile is Cys-158. An NAD(+)-binding site is contributed by Asn-322.

The protein belongs to the glyceraldehyde-3-phosphate dehydrogenase family. As to quaternary structure, homotetramer.

It localises to the cytoplasm. It catalyses the reaction D-glyceraldehyde 3-phosphate + phosphate + NAD(+) = (2R)-3-phospho-glyceroyl phosphate + NADH + H(+). Its pathway is carbohydrate degradation; glycolysis; pyruvate from D-glyceraldehyde 3-phosphate: step 1/5. In Caenorhabditis elegans, this protein is Glyceraldehyde-3-phosphate dehydrogenase 1 (gpd-1).